Here is a 449-residue protein sequence, read N- to C-terminus: UDP-N-acetylmuramate--L-alanine ligase (449 aa).

113 to 119 (GSHGKTT) serves as a coordination point for ATP.

The protein belongs to the MurCDEF family.

It is found in the cytoplasm. It catalyses the reaction UDP-N-acetyl-alpha-D-muramate + L-alanine + ATP = UDP-N-acetyl-alpha-D-muramoyl-L-alanine + ADP + phosphate + H(+). Its pathway is cell wall biogenesis; peptidoglycan biosynthesis. In terms of biological role, cell wall formation. The chain is UDP-N-acetylmuramate--L-alanine ligase from Hydrogenobaculum sp. (strain Y04AAS1).